The chain runs to 554 residues: ATP-dependent RNA helicase MRH4, mitochondrial (554 aa).

The transit peptide at 1–54 (MSSVGIASASLWLRGPVKSALKGRWLSCEQMRRYGTKSAPAVRKGGHSKKARQA) directs the protein to the mitochondrion. The short motif at 119 to 140 (DCGLDDKRVAAFLGQVQPTPIQ) is the Q motif element. The Helicase ATP-binding domain occupies 150 to 337 (TLMEPQLQVH…NKLFPNLQVV (188 aa)). 163–170 (AETGSGKT) provides a ligand contact to ATP. The short motif at 285-288 (DEAD) is the DEAD box element. The region spanning 368–554 (ALAQALYAIM…PVVKKNRPIQ (187 aa)) is the Helicase C-terminal domain. The segment at 439-474 (RIQDQVRPSELKKPQERRLPNSNIKVADSKDNGQRS) is disordered. Residues 445 to 457 (RPSELKKPQERRL) show a composition bias toward basic and acidic residues.

The protein belongs to the DEAD box helicase family. MRH4 subfamily.

It localises to the mitochondrion. The catalysed reaction is ATP + H2O = ADP + phosphate + H(+). Its function is as follows. ATP-binding RNA helicase involved in mitochondrial RNA metabolism. Required for maintenance of mitochondrial DNA. This chain is ATP-dependent RNA helicase MRH4, mitochondrial (MRH4), found in Eremothecium gossypii (strain ATCC 10895 / CBS 109.51 / FGSC 9923 / NRRL Y-1056) (Yeast).